A 686-amino-acid polypeptide reads, in one-letter code: tRNA (guanine(37)-N(1))-methyltransferase (686 aa).

Positions 206–244 are disordered; the sequence is GGPSSVSLTEDTDGSEQPQGLPRAAAAPPPPSNKRRASY. S-adenosyl-L-methionine contacts are provided by residues H428, 466-467, 495-496, and N530; these read DL and DG.

It belongs to the class I-like SAM-binding methyltransferase superfamily. TRM5/TYW2 family. In terms of assembly, monomer.

The protein localises to the mitochondrion matrix. It is found in the nucleus. It localises to the cytoplasm. The enzyme catalyses guanosine(37) in tRNA + S-adenosyl-L-methionine = N(1)-methylguanosine(37) in tRNA + S-adenosyl-L-homocysteine + H(+). Specifically methylates the N1 position of guanosine-37 in various cytoplasmic and mitochondrial tRNAs. Methylation is not dependent on the nature of the nucleoside 5' of the target nucleoside. This is the first step in the biosynthesis of wybutosine (yW), a modified base adjacent to the anticodon of tRNAs and required for accurate decoding. The polypeptide is tRNA (guanine(37)-N(1))-methyltransferase (Leishmania major).